The chain runs to 194 residues: 2,4-dinitrotoluene dioxygenase system, small oxygenase component (194 aa).

It belongs to the bacterial ring-hydroxylating dioxygenase beta subunit family. In terms of assembly, the 2,4-dinitrotoluene dioxygenase (DNTDO) multicomponent enzyme system is composed of an electron transfer component and a dioxygenase component (iron sulfur protein (ISP)). The electron transfer component is composed of a ferredoxin reductase (DntAa) and a ferredoxin (DntAb), and the dioxygenase component is formed of a large alpha subunit (DntAc) and a small beta subunit (DntAd).

Component of the 2,4-dinitrotoluene dioxygenase (DNTDO) multicomponent enzyme system which catalyzes the incorporation of both atoms of molecular oxygen into 2,4-dinitrotoluene (DNT) to form 4-methyl-5-nitrocatechol (MNC) and nitrite. The beta subunit seems to have a structural role in the holoenzyme. Also able to convert naphthalene to cis-(1R,2S)-dihydroxy-1,2-dihydronaphthalene. The polypeptide is 2,4-dinitrotoluene dioxygenase system, small oxygenase component (Burkholderia sp. (strain RASC)).